We begin with the raw amino-acid sequence, 427 residues long: Enolase (427 aa).

A (2R)-2-phosphoglycerate-binding site is contributed by Gln-163. The Proton donor role is filled by Glu-205. Mg(2+) is bound by residues Asp-242, Glu-285, and Asp-312. The (2R)-2-phosphoglycerate site is built by Lys-337, Arg-366, Ser-367, and Lys-388. Catalysis depends on Lys-337, which acts as the Proton acceptor.

It belongs to the enolase family. Requires Mg(2+) as cofactor.

Its subcellular location is the cytoplasm. It localises to the secreted. It is found in the cell surface. The enzyme catalyses (2R)-2-phosphoglycerate = phosphoenolpyruvate + H2O. The protein operates within carbohydrate degradation; glycolysis; pyruvate from D-glyceraldehyde 3-phosphate: step 4/5. In terms of biological role, catalyzes the reversible conversion of 2-phosphoglycerate (2-PG) into phosphoenolpyruvate (PEP). It is essential for the degradation of carbohydrates via glycolysis. The chain is Enolase from Janthinobacterium sp. (strain Marseille) (Minibacterium massiliensis).